The chain runs to 214 residues: Non-structural protein NP-1 (214 aa).

Disordered stretches follow at residues 1-87 (MSSE…TNPY) and 192-214 (ESEE…NASN). Residues 33-43 (SRSRSPIRRHG) are compositionally biased toward basic residues. A compositionally biased stretch (basic and acidic residues) spans 44-55 (EKNLEYAHHSNQ). Residues 56–71 (ENRQSSYTALKTSDQA) are compositionally biased toward polar residues. The span at 192–201 (ESEEVTDEEM) shows a compositional bias: acidic residues.

Belongs to the Bocaparvovirus Non-structural protein NP-1 family.

The protein localises to the host nucleus. Required for the expression of the capsid proteins. Performs the splicing and internal polyadenylation of the viral capsid-encoding mRNA precursor, which allows its maturation and expression. Transactivates the viral promoter. The polypeptide is Non-structural protein NP-1 (NP1) (Human bocavirus 2 (HBoV2)).